We begin with the raw amino-acid sequence, 80 residues long: UPF0125 protein XF_2346 (80 aa).

This sequence belongs to the UPF0125 (RnfH) family.

This is UPF0125 protein XF_2346 from Xylella fastidiosa (strain 9a5c).